Reading from the N-terminus, the 288-residue chain is UDP-3-O-acyl-N-acetylglucosamine deacetylase (288 aa).

3 residues coordinate Zn(2+): His-79, His-236, and Asp-240. His-263 serves as the catalytic Proton donor.

It belongs to the LpxC family. Zn(2+) serves as cofactor.

It carries out the reaction a UDP-3-O-[(3R)-3-hydroxyacyl]-N-acetyl-alpha-D-glucosamine + H2O = a UDP-3-O-[(3R)-3-hydroxyacyl]-alpha-D-glucosamine + acetate. Its pathway is glycolipid biosynthesis; lipid IV(A) biosynthesis; lipid IV(A) from (3R)-3-hydroxytetradecanoyl-[acyl-carrier-protein] and UDP-N-acetyl-alpha-D-glucosamine: step 2/6. In terms of biological role, catalyzes the hydrolysis of UDP-3-O-myristoyl-N-acetylglucosamine to form UDP-3-O-myristoylglucosamine and acetate, the committed step in lipid A biosynthesis. This is UDP-3-O-acyl-N-acetylglucosamine deacetylase from Rickettsia felis (strain ATCC VR-1525 / URRWXCal2) (Rickettsia azadi).